The sequence spans 215 residues: MSEAKRRAAEKAIEYVENDMIIGVGTGSTVAYFIDALGRTPKRIKGAVSSSEQSTAHLKQHGIEVLELNHTGTLPLYVDGADECDPYKRLIKGGGASLTREKIIAEASKQFICIIDPNKQVATLGKFPLPIEVIPMARSLVARQIMARTDGQPVWREGVITDNGNVILDVHHLCITDPVKLEQELNQIPGVVCVGLFARRCADLVIIGSEPPHIL.

Residues 26-29 (TGST), 79-82 (DGAD), and 92-95 (KGGG) contribute to the substrate site. Residue Glu-101 is the Proton acceptor of the active site. Lys-119 is a binding site for substrate.

Belongs to the ribose 5-phosphate isomerase family. In terms of assembly, homodimer.

It carries out the reaction aldehydo-D-ribose 5-phosphate = D-ribulose 5-phosphate. The protein operates within carbohydrate degradation; pentose phosphate pathway; D-ribose 5-phosphate from D-ribulose 5-phosphate (non-oxidative stage): step 1/1. Its function is as follows. Catalyzes the reversible conversion of ribose-5-phosphate to ribulose 5-phosphate. In Xylella fastidiosa (strain M12), this protein is Ribose-5-phosphate isomerase A.